A 336-amino-acid chain; its full sequence is Dihydroorotate dehydrogenase (quinone) (336 aa).

FMN is bound by residues 62-66 and Thr-86; that span reads AGMDK. Position 66 (Lys-66) interacts with substrate. 111 to 115 serves as a coordination point for substrate; sequence NRMGF. Residues Asn-139 and Asn-172 each coordinate FMN. Asn-172 contacts substrate. Ser-175 serves as the catalytic Nucleophile. Asn-177 is a binding site for substrate. FMN is bound by residues Lys-217 and Thr-245. 246–247 is a substrate binding site; it reads NT. FMN is bound by residues Gly-268, Gly-297, and 318–319; that span reads YS.

Belongs to the dihydroorotate dehydrogenase family. Type 2 subfamily. In terms of assembly, monomer. FMN serves as cofactor.

Its subcellular location is the cell membrane. It catalyses the reaction (S)-dihydroorotate + a quinone = orotate + a quinol. It functions in the pathway pyrimidine metabolism; UMP biosynthesis via de novo pathway; orotate from (S)-dihydroorotate (quinone route): step 1/1. Functionally, catalyzes the conversion of dihydroorotate to orotate with quinone as electron acceptor. The chain is Dihydroorotate dehydrogenase (quinone) from Buchnera aphidicola subsp. Schizaphis graminum (strain Sg).